The sequence spans 154 residues: Transcriptional repressor NrdR (154 aa).

A zinc finger spans residues 3–34; that stretch reads CPFCRHSDSRVIDSRETDEGQAIRRRRSCPEC. In terms of domain architecture, ATP-cone spans 46 to 136; it reads VAVVKRSGVT…VYRSFSSADD (91 aa).

Belongs to the NrdR family. Zn(2+) is required as a cofactor.

In terms of biological role, negatively regulates transcription of bacterial ribonucleotide reductase nrd genes and operons by binding to NrdR-boxes. The protein is Transcriptional repressor NrdR of Mycobacterium leprae (strain Br4923).